The chain runs to 185 residues: Large ribosomal subunit protein uL5 (185 aa).

Belongs to the universal ribosomal protein uL5 family. In terms of assembly, part of the 50S ribosomal subunit; part of the 5S rRNA/L5/L18/L25 subcomplex. Contacts the 5S rRNA and the P site tRNA. Forms a bridge to the 30S subunit in the 70S ribosome.

Its function is as follows. This is one of the proteins that bind and probably mediate the attachment of the 5S RNA into the large ribosomal subunit, where it forms part of the central protuberance. In the 70S ribosome it contacts protein S13 of the 30S subunit (bridge B1b), connecting the 2 subunits; this bridge is implicated in subunit movement. Contacts the P site tRNA; the 5S rRNA and some of its associated proteins might help stabilize positioning of ribosome-bound tRNAs. This chain is Large ribosomal subunit protein uL5, found in Bradyrhizobium diazoefficiens (strain JCM 10833 / BCRC 13528 / IAM 13628 / NBRC 14792 / USDA 110).